A 92-amino-acid polypeptide reads, in one-letter code: Parbolysin P7 (92 aa).

Disulfide bonds link C15-C36, C21-C32, and C46-C59.

This sequence belongs to the worm cytolysin family. In terms of tissue distribution, localized within the skin and proboscis and are most readily isolated from body mucus secretions.

The protein localises to the secreted. In terms of biological role, cytolysin that shows hemolytic activity (on bovine erythrocytes, HC(50)=5.75 mg/ml). This hemolytic activity is completely inhibited by small unilamelar vesicles composed of PC/PG, PC/PI and PC/PS in 1:1 molar ratios (with at least 100 mg/ml concentration). The polypeptide is Parbolysin P7 (Parborlasia corrugatus (Antarctic nemertean worm)).